The following is a 230-amino-acid chain: MTILTARPEAITFDPQQSALIVVDMQNAYATPGGYLDLAGFDVSTTRPVIANIQTAVTAARAAGMLIIWFQNGWDEQYVEAGGPGSPNFHKSNALKTMRKQPQLQGKLLAKGSWDYQLVDELVPQPGDIVLPKPRYSGFFNTPLDSILRSRGIRHLVFTGIATNVCVESTLRDGFFLEYFGVVLEDATHQAGPEFAQKAALFNIETFFGWVSDVETFCDALSPTSFARIA.

The active-site Proton acceptor is the aspartate 24. The active site involves lysine 133. Cysteine 166 serves as the catalytic Nucleophile.

The protein belongs to the isochorismatase family. RutB subfamily.

It carries out the reaction (Z)-3-ureidoacrylate + H2O + H(+) = (Z)-3-aminoacrylate + NH4(+) + CO2. The catalysed reaction is (Z)-3-ureidoacrylate + H2O = (Z)-3-aminoacrylate + carbamate + H(+). It catalyses the reaction (Z)-2-methylureidoacrylate + H2O + H(+) = (Z)-2-methylaminoacrylate + NH4(+) + CO2. Functionally, hydrolyzes ureidoacrylate to form aminoacrylate and carbamate. The carbamate hydrolyzes spontaneously, thereby releasing one of the nitrogen atoms of the pyrimidine ring as ammonia and one of its carbon atoms as CO2. The chain is Ureidoacrylate amidohydrolase RutB from Escherichia coli O44:H18 (strain 042 / EAEC).